The primary structure comprises 318 residues: dTDP-6-deoxy-L-talose 4-dehydrogenase (NAD(P)(+)) (318 aa).

NAD(+)-binding positions include 19 to 20 (FI), 60 to 61 (DP), asparagine 95, threonine 120, tyrosine 145, and lysine 149. Positions 120 and 145 each coordinate substrate. Catalysis depends on tyrosine 145, which acts as the Proton acceptor.

It belongs to the NAD(P)-dependent epimerase/dehydratase family.

It carries out the reaction dTDP-6-deoxy-beta-L-talose + NAD(+) = dTDP-4-dehydro-beta-L-rhamnose + NADH + H(+). The enzyme catalyses dTDP-6-deoxy-beta-L-talose + NADP(+) = dTDP-4-dehydro-beta-L-rhamnose + NADPH + H(+). Its function is as follows. Catalyzes the reduction of dTDP-6-deoxy-L-lyxo-4-hexulose to dTDP-6-deoxy-L-talose. Can use NAD(+) or NADP(+). The protein is dTDP-6-deoxy-L-talose 4-dehydrogenase (NAD(P)(+)) (tal) of Kitasatospora kifunensis (Streptomyces kifunensis).